The primary structure comprises 91 residues: Signal peptidase complex subunit 1 (91 aa).

Residues 1–28 (MEIFNDLSRKLVFPIDYPSQRRVAKLTD) lie on the Cytoplasmic side of the membrane. A helical transmembrane segment spans residues 29–48 (IILGSGTLVSCLLGFYAGSL). Over 49 to 51 (SLT) the chain is Lumenal. A helical membrane pass occupies residues 52–71 (LYAFAAAYGLALLLVVPAYG). At 72–91 (KYRQQKLAWVGSAAATTKDL) the chain is on the cytoplasmic side.

Belongs to the SPCS1 family. Component of the signal peptidase complex (SPC) composed of a catalytic subunit SEC11 and three accessory subunits SPC1, SPC2 and SPC3. The complex induces a local thinning of the ER membrane which is used to measure the length of the signal peptide (SP) h-region of protein substrates. This ensures the selectivity of the complex towards h-regions shorter than 18-20 amino acids. SPC associates with the translocon complex.

The protein resides in the endoplasmic reticulum membrane. Component of the signal peptidase complex (SPC) which catalyzes the cleavage of N-terminal signal sequences from nascent proteins as they are translocated into the lumen of the endoplasmic reticulum. Dispensable for SPC enzymatic activity. The chain is Signal peptidase complex subunit 1 (SPC1) from Eremothecium gossypii (strain ATCC 10895 / CBS 109.51 / FGSC 9923 / NRRL Y-1056) (Yeast).